Here is a 216-residue protein sequence, read N- to C-terminus: Nucleoside triphosphate pyrophosphatase (216 aa).

D86 acts as the Proton acceptor in catalysis.

Belongs to the Maf family. Requires a divalent metal cation as cofactor.

Its subcellular location is the cytoplasm. The enzyme catalyses a ribonucleoside 5'-triphosphate + H2O = a ribonucleoside 5'-phosphate + diphosphate + H(+). It catalyses the reaction a 2'-deoxyribonucleoside 5'-triphosphate + H2O = a 2'-deoxyribonucleoside 5'-phosphate + diphosphate + H(+). In terms of biological role, nucleoside triphosphate pyrophosphatase. May have a dual role in cell division arrest and in preventing the incorporation of modified nucleotides into cellular nucleic acids. This is Nucleoside triphosphate pyrophosphatase from Dictyostelium discoideum (Social amoeba).